The sequence spans 623 residues: Isocitrate dehydrogenase kinase/phosphatase (623 aa).

Residues 344–350 (APGIKGM) and Lys365 each bind ATP. Asp400 is an active-site residue.

The protein belongs to the AceK family.

The protein localises to the cytoplasm. The catalysed reaction is L-seryl-[isocitrate dehydrogenase] + ATP = O-phospho-L-seryl-[isocitrate dehydrogenase] + ADP + H(+). Bifunctional enzyme which can phosphorylate or dephosphorylate isocitrate dehydrogenase (IDH) on a specific serine residue. This is a regulatory mechanism which enables bacteria to bypass the Krebs cycle via the glyoxylate shunt in response to the source of carbon. When bacteria are grown on glucose, IDH is fully active and unphosphorylated, but when grown on acetate or ethanol, the activity of IDH declines drastically concomitant with its phosphorylation. In Polaromonas naphthalenivorans (strain CJ2), this protein is Isocitrate dehydrogenase kinase/phosphatase.